Consider the following 674-residue polypeptide: Probable potassium transport system protein Kup (674 aa).

A run of 12 helical transmembrane segments spans residues 7-27 (IFWG…TSPL), 52-72 (LSLV…LIAL), 95-115 (WLIL…TLTP), 145-165 (LVTF…TSFI), 169-189 (FGPL…VNLI), 204-224 (LMLL…SVFL), 244-264 (IYLT…GQGA), 291-311 (VYLF…QALI), 342-362 (IYIR…LVYF), 368-388 (MEAA…ILLS), 397-417 (VVFN…FLIS), and 425-445 (GGYV…IWYF).

This sequence belongs to the HAK/KUP transporter (TC 2.A.72) family.

Its subcellular location is the cell membrane. The catalysed reaction is K(+)(in) + H(+)(in) = K(+)(out) + H(+)(out). Transport of potassium into the cell. Likely operates as a K(+):H(+) symporter. The protein is Probable potassium transport system protein Kup of Ligilactobacillus salivarius (strain UCC118) (Lactobacillus salivarius).